A 423-amino-acid polypeptide reads, in one-letter code: Cyclin-dependent kinase 14 (423 aa).

Ser-32, Ser-49, and Ser-88 each carry phosphoserine. The span at 49 to 64 (SENNACINFKTSSTGK) shows a compositional bias: polar residues. Residues 49 to 87 (SENNACINFKTSSTGKESPKVRRHSSPSSPTSPKFGKAD) are disordered. One can recognise a Protein kinase domain in the interval 89–373 (YEKLEKLGEG…AQAALSHEYF (285 aa)). ATP contacts are provided by residues 95–103 (LGEGSYATV) and Lys-118. Asp-210 serves as the catalytic Proton acceptor. Positions 403-423 (ESMRAFGKNNSYGKSLSNSKH) are disordered. Residues 410–423 (KNNSYGKSLSNSKH) are compositionally biased toward polar residues.

It belongs to the protein kinase superfamily. CMGC Ser/Thr protein kinase family. CDC2/CDKX subfamily. As to quaternary structure, found in a complex with LRP6, CCNY and CAPRIN2 during G2/M stage; CAPRIN2 functions as a scaffold for the complex by binding to CCNY via its N terminus and to CDK14 via its C terminus. Interacts with CCNY; CCNY mediates its recruitment to the plasma membrane and promotes phosphorylation of LRP6. Interacts with CCDN3 and CDKN1A. Interacts with SEPT8. Interacts with 14-3-3 proteina YWHAB, YWHAE, YWHAH and YWHAQ.

It is found in the cell membrane. Its subcellular location is the cytoplasm. The protein localises to the nucleus. The catalysed reaction is L-seryl-[protein] + ATP = O-phospho-L-seryl-[protein] + ADP + H(+). The enzyme catalyses L-threonyl-[protein] + ATP = O-phospho-L-threonyl-[protein] + ADP + H(+). With respect to regulation, serine/threonine-protein kinase activity is promoted by associated cyclins CCDN3 and CCNY and repressed by CDKN1A. In terms of biological role, serine/threonine-protein kinase involved in the control of the eukaryotic cell cycle, whose activity is controlled by an associated cyclin. Acts as a cell-cycle regulator of Wnt signaling pathway during G2/M phase by mediating the phosphorylation of LRP6 at 'Ser-1490', leading to the activation of the Wnt signaling pathway. Acts as a regulator of cell cycle progression and cell proliferation via its interaction with CCDN3. Phosphorylates RB1 in vitro, however the relevance of such result remains to be confirmed in vivo. May also play a role in meiosis, neuron differentiation and may indirectly act as a negative regulator of insulin-responsive glucose transport. The protein is Cyclin-dependent kinase 14 (CDK14) of Callithrix jacchus (White-tufted-ear marmoset).